A 458-amino-acid chain; its full sequence is Chondroitin hydrolase (458 aa).

The N-terminal stretch at 1 to 22 (MVIVWYHQLLLVLLIFIGAAKG) is a signal peptide. The EGF-like domain maps to 358-401 (NLDKCRMERCEGRGECYLPRPKTNPAIYNFACRCERPYFGKSCE). 3 disulfide bridges follow: Cys-362–Cys-373, Cys-367–Cys-389, and Cys-391–Cys-400.

The protein belongs to the glycosyl hydrolase 56 family.

In terms of biological role, endo-beta-galactosaminidase that specifically hydrolyzes chondroitin, releasing GlcUA-beta-(1-&gt;3)-GalNAc-beta-(1-&gt;4)-GlcUA-beta-(1-&gt;3)-GalNAc as the main product. Also hydrolyzes to a lesser extent chondroitin sulfates (CS-A, CS-C) and hyaluronic acid. May regulate the function of chondroitin in cell division. The sequence is that of Chondroitin hydrolase from Caenorhabditis elegans.